The primary structure comprises 205 residues: V-type ATP synthase subunit E (205 aa).

The protein belongs to the V-ATPase E subunit family.

Functionally, produces ATP from ADP in the presence of a proton gradient across the membrane. This chain is V-type ATP synthase subunit E, found in Treponema denticola (strain ATCC 35405 / DSM 14222 / CIP 103919 / JCM 8153 / KCTC 15104).